The following is a 289-amino-acid chain: Shikimate dehydrogenase (NADP(+)) (289 aa).

Shikimate contacts are provided by residues 20 to 22 (SIS) and Ser-67. The active-site Proton acceptor is Lys-71. Asn-92 and Asp-107 together coordinate shikimate. NADP(+)-binding positions include 132–136 (GGGGA) and Val-230. A shikimate-binding site is contributed by Tyr-232. Gly-253 lines the NADP(+) pocket.

This sequence belongs to the shikimate dehydrogenase family. In terms of assembly, homodimer.

The catalysed reaction is shikimate + NADP(+) = 3-dehydroshikimate + NADPH + H(+). It functions in the pathway metabolic intermediate biosynthesis; chorismate biosynthesis; chorismate from D-erythrose 4-phosphate and phosphoenolpyruvate: step 4/7. Functionally, involved in the biosynthesis of the chorismate, which leads to the biosynthesis of aromatic amino acids. Catalyzes the reversible NADPH linked reduction of 3-dehydroshikimate (DHSA) to yield shikimate (SA). The chain is Shikimate dehydrogenase (NADP(+)) from Streptococcus mutans serotype c (strain ATCC 700610 / UA159).